We begin with the raw amino-acid sequence, 255 residues long: 3-deoxy-manno-octulosonate cytidylyltransferase (255 aa).

It belongs to the KdsB family.

The protein localises to the cytoplasm. The enzyme catalyses 3-deoxy-alpha-D-manno-oct-2-ulosonate + CTP = CMP-3-deoxy-beta-D-manno-octulosonate + diphosphate. It participates in nucleotide-sugar biosynthesis; CMP-3-deoxy-D-manno-octulosonate biosynthesis; CMP-3-deoxy-D-manno-octulosonate from 3-deoxy-D-manno-octulosonate and CTP: step 1/1. It functions in the pathway bacterial outer membrane biogenesis; lipopolysaccharide biosynthesis. In terms of biological role, activates KDO (a required 8-carbon sugar) for incorporation into bacterial lipopolysaccharide in Gram-negative bacteria. This Hahella chejuensis (strain KCTC 2396) protein is 3-deoxy-manno-octulosonate cytidylyltransferase.